Reading from the N-terminus, the 319-residue chain is Acetyl-coenzyme A carboxylase carboxyl transferase subunit alpha (319 aa).

Positions 39 to 293 (RLQKKSNDLT…KAVLEKQLHE (255 aa)) constitute a CoA carboxyltransferase C-terminal domain.

This sequence belongs to the AccA family. In terms of assembly, acetyl-CoA carboxylase is a heterohexamer composed of biotin carboxyl carrier protein (AccB), biotin carboxylase (AccC) and two subunits each of ACCase subunit alpha (AccA) and ACCase subunit beta (AccD).

It localises to the cytoplasm. It carries out the reaction N(6)-carboxybiotinyl-L-lysyl-[protein] + acetyl-CoA = N(6)-biotinyl-L-lysyl-[protein] + malonyl-CoA. It participates in lipid metabolism; malonyl-CoA biosynthesis; malonyl-CoA from acetyl-CoA: step 1/1. Its function is as follows. Component of the acetyl coenzyme A carboxylase (ACC) complex. First, biotin carboxylase catalyzes the carboxylation of biotin on its carrier protein (BCCP) and then the CO(2) group is transferred by the carboxyltransferase to acetyl-CoA to form malonyl-CoA. This chain is Acetyl-coenzyme A carboxylase carboxyl transferase subunit alpha, found in Neisseria meningitidis serogroup A / serotype 4A (strain DSM 15465 / Z2491).